The sequence spans 240 residues: Transposase for insertion sequence element IS3411 (240 aa).

The region spanning 125–240 (VAERPDQLWV…RASMVFTKRR (116 aa)) is the Integrase catalytic domain.

In terms of biological role, involved in the transposition of the insertion sequence. This is Transposase for insertion sequence element IS3411 from Escherichia coli.